The chain runs to 367 residues: Chorismate synthase (367 aa).

Position 48 (arginine 48) interacts with NADP(+). FMN-binding positions include 125–127 (RSS), 243–244 (NA), glycine 283, 298–302 (KPTSS), and arginine 324.

It belongs to the chorismate synthase family. Homotetramer. The cofactor is FMNH2.

It catalyses the reaction 5-O-(1-carboxyvinyl)-3-phosphoshikimate = chorismate + phosphate. The protein operates within metabolic intermediate biosynthesis; chorismate biosynthesis; chorismate from D-erythrose 4-phosphate and phosphoenolpyruvate: step 7/7. Its function is as follows. Catalyzes the anti-1,4-elimination of the C-3 phosphate and the C-6 proR hydrogen from 5-enolpyruvylshikimate-3-phosphate (EPSP) to yield chorismate, which is the branch point compound that serves as the starting substrate for the three terminal pathways of aromatic amino acid biosynthesis. This reaction introduces a second double bond into the aromatic ring system. The protein is Chorismate synthase of Psychrobacter cryohalolentis (strain ATCC BAA-1226 / DSM 17306 / VKM B-2378 / K5).